Reading from the N-terminus, the 415-residue chain is Histidine--tRNA ligase (415 aa).

Belongs to the class-II aminoacyl-tRNA synthetase family. As to quaternary structure, homodimer.

It localises to the cytoplasm. It catalyses the reaction tRNA(His) + L-histidine + ATP = L-histidyl-tRNA(His) + AMP + diphosphate + H(+). The polypeptide is Histidine--tRNA ligase (Phytoplasma australiense).